The chain runs to 36 residues: DGECGGFWWKCGSGKPACCPKYVCSPKWGLCNFPMP.

Disulfide bonds link Cys4/Cys19, Cys11/Cys24, and Cys18/Cys31.

The protein belongs to the neurotoxin 10 (Hwtx-1) family. 44 (Jztx-4) subfamily. Expressed by the venom gland.

It is found in the secreted. Gating modifier of Kv2.1/KCNB1, Kv2.2/KCNB2 and Kv4.3/KCND3 channels. In Chilobrachys guangxiensis (Chinese earth tiger tarantula), this protein is Kappa-theraphotoxin-Pg1b.